A 154-amino-acid chain; its full sequence is MKTISVKPADVEKKWVVIDAEGAVVGRLAAYVATRLRGKHRPDYTPHVDMGDNIIIVNADKVVFTGKKRDDKRYYHHTGHPGGIKETSPAKILDGRFPERVVEKAVLRMLPKDSPLARQQYSNLRVYAGPDHKHEAQQPEVVDFKSMNSKNTRG.

Residues 131 to 154 form a disordered region; that stretch reads DHKHEAQQPEVVDFKSMNSKNTRG.

Belongs to the universal ribosomal protein uL13 family. Part of the 50S ribosomal subunit.

In terms of biological role, this protein is one of the early assembly proteins of the 50S ribosomal subunit, although it is not seen to bind rRNA by itself. It is important during the early stages of 50S assembly. The protein is Large ribosomal subunit protein uL13 of Maricaulis maris (strain MCS10) (Caulobacter maris).